Consider the following 663-residue polypeptide: General transcription and DNA repair factor IIH subunit tcf-29 (663 aa).

2 BSD domains span residues 147–206 and 227–278; these read WFED…RAYA and ENGE…LSKK. Disordered regions lie at residues 452 to 491 and 513 to 535; these read DSDG…QHVG and HLTT…EERP. Residues 453-465 are compositionally biased toward basic and acidic residues; sequence SDGRGGIDLHRSI. Over residues 515 to 528 the composition is skewed to low complexity; the sequence is TTTTTHGGSHTTTT.

It belongs to the TFB1 family. Component of the 7-subunit TFIIH core complex composed of XPB/rad25, XPD/dnr-10, tcf-30/SSL1, tcf-29/TFB1, tcf-11/TFB2, tcf-14/TFB4 and rtf-1/TFB5, which is active in NER. The core complex associates with the 3-subunit CTD-kinase module TFIIK composed of div-66/cyclin H, prk-3/KIN28 and rtf-2/TFB3 to form the 10-subunit holoenzyme (holo-TFIIH) active in transcription.

Its subcellular location is the nucleus. Its function is as follows. Component of the general transcription and DNA repair factor IIH (TFIIH) core complex, which is involved in general and transcription-coupled nucleotide excision repair (NER) of damaged DNA and, when complexed to TFIIK, in RNA transcription by RNA polymerase II. In NER, TFIIH acts by opening DNA around the lesion to allow the excision of the damaged oligonucleotide and its replacement by a new DNA fragment. In transcription, TFIIH has an essential role in transcription initiation. When the pre-initiation complex (PIC) has been established, TFIIH is required for promoter opening and promoter escape. Phosphorylation of the C-terminal tail (CTD) of the largest subunit of RNA polymerase II by the kinase module TFIIK controls the initiation of transcription. The sequence is that of General transcription and DNA repair factor IIH subunit tcf-29 (tcf-29) from Neurospora crassa (strain ATCC 24698 / 74-OR23-1A / CBS 708.71 / DSM 1257 / FGSC 987).